The following is a 25-amino-acid chain: GHKLGEFAPTRTFRGHKKEDKKVKR.

Residues 1-25 are disordered; that stretch reads GHKLGEFAPTRTFRGHKKEDKKVKR.

Belongs to the universal ribosomal protein uS19 family.

Protein S19 forms a complex with S13 that binds strongly to the 16S ribosomal RNA. The sequence is that of Small ribosomal subunit protein uS19 (rpsS) from Acholeplasma laidlawii.